A 568-amino-acid chain; its full sequence is Probable asparagine--tRNA ligase, cytoplasmic (568 aa).

The protein belongs to the class-II aminoacyl-tRNA synthetase family.

It is found in the cytoplasm. It catalyses the reaction tRNA(Asn) + L-asparagine + ATP = L-asparaginyl-tRNA(Asn) + AMP + diphosphate + H(+). In terms of biological role, cytosolic asparaginyl-tRNA synthetase which catalyzes the specific attachment of asparagine to its cognate tRNA. The sequence is that of Probable asparagine--tRNA ligase, cytoplasmic (nrs1) from Schizosaccharomyces pombe (strain 972 / ATCC 24843) (Fission yeast).